Consider the following 327-residue polypeptide: rRNA 2'-O-methyltransferase fibrillarin (327 aa).

Positions 1–93 (MKPGFSPRGG…RGNQSGKNVM (93 aa)) are disordered. A compositionally biased stretch (gly residues) spans 7-80 (PRGGGFGGRG…GGGRGRGGGR (74 aa)). Asymmetric dimethylarginine occurs at positions 8, 15, 21, 24, 28, and 31. Glycyl lysine isopeptide (Lys-Gly) (interchain with G-Cter in SUMO2) cross-links involve residues lysine 90, lysine 108, and lysine 115. At lysine 108 the chain carries N6-acetyllysine. Position 122 is a phosphoserine (serine 122). Lysine 127 carries the post-translational modification N6-acetyllysine. Residues serine 130 and serine 132 each carry the phosphoserine modification. Residues lysine 137, lysine 149, and lysine 164 each participate in a glycyl lysine isopeptide (Lys-Gly) (interchain with G-Cter in SUMO2) cross-link. S-adenosyl-L-methionine-binding positions include 178–179 (TT) and 197–198 (EF). N6-acetyllysine occurs at positions 211 and 212. S-adenosyl-L-methionine is bound by residues 222–223 (DA) and 242–245 (DVAQ).

This sequence belongs to the methyltransferase superfamily. Fibrillarin family. In terms of assembly, component of box C/D small nucleolar ribonucleoprotein (snoRNP) particles that contain SNU13, FBL, NOP5 and NOP56, plus a guide RNA. It is associated with the U3, U8, U13, X and Y small nuclear RNAs. Component of several ribosomal and nucleolar protein complexes. Part of the small subunit (SSU) processome, composed of more than 70 proteins and the RNA chaperone small nucleolar RNA (snoRNA) U3. Interacts with PRMT5 and UTP20. Interacts with DDX5 and C1QBP. Interacts with NOL11. Interacts with PIH1D1. Interacts with RRP1B. Interacts with NOLC1. Interacts with SDE2. Interacts with NOP2 and NOP56. Post-translationally, ubiquitinated. Ubiquitination leads to proteasomal degradation. Deubiquitinated by USP36. In terms of processing, by homology to other fibrillarins, some or all of the N-terminal domain arginines are modified to asymmetric dimethylarginine (DMA). Acetylated by CREBBP/CBP, preventing methylation of 'Gln-105' of histone H2A (H2AQ104me), without affecting rRNA methylation. Deacetylation by SIRT7 restores methylation of 'Gln-105' of histone H2A (H2AQ104me).

It is found in the nucleus. The protein localises to the nucleolus. The protein resides in the nucleoplasm. It catalyses the reaction L-glutaminyl-[histone H2A] + S-adenosyl-L-methionine = N(5)-methyl-L-glutaminyl-[histone H2A] + S-adenosyl-L-homocysteine + H(+). The catalysed reaction is a ribonucleotide in rRNA + S-adenosyl-L-methionine = a 2'-O-methylribonucleotide in rRNA + S-adenosyl-L-homocysteine + H(+). It carries out the reaction a ribonucleotide in U6 snRNA + S-adenosyl-L-methionine = a 2'-O-methylribonucleotide in U6 snRNA + S-adenosyl-L-homocysteine + H(+). Its function is as follows. S-adenosyl-L-methionine-dependent methyltransferase that has the ability to methylate both RNAs and proteins. Involved in pre-rRNA processing by catalyzing the site-specific 2'-hydroxyl methylation of ribose moieties in pre-ribosomal RNA. Site specificity is provided by a guide RNA that base pairs with the substrate. Methylation occurs at a characteristic distance from the sequence involved in base pairing with the guide RNA. Probably catalyzes 2'-O-methylation of U6 snRNAs in box C/D RNP complexes. U6 snRNA 2'-O-methylation is required for mRNA splicing fidelity. Also acts as a protein methyltransferase by mediating methylation of 'Gln-105' of histone H2A (H2AQ104me), a modification that impairs binding of the FACT complex and is specifically present at 35S ribosomal DNA locus. Part of the small subunit (SSU) processome, first precursor of the small eukaryotic ribosomal subunit. During the assembly of the SSU processome in the nucleolus, many ribosome biogenesis factors, an RNA chaperone and ribosomal proteins associate with the nascent pre-rRNA and work in concert to generate RNA folding, modifications, rearrangements and cleavage as well as targeted degradation of pre-ribosomal RNA by the RNA exosome. This Rattus norvegicus (Rat) protein is rRNA 2'-O-methyltransferase fibrillarin (Fbl).